Consider the following 147-residue polypeptide: Protein YjdN (147 aa).

This Escherichia coli (strain K12) protein is Protein YjdN (yjdN).